A 397-amino-acid polypeptide reads, in one-letter code: Tryptophan synthase beta chain (397 aa).

K87 is subject to N6-(pyridoxal phosphate)lysine.

This sequence belongs to the TrpB family. As to quaternary structure, tetramer of two alpha and two beta chains. Pyridoxal 5'-phosphate serves as cofactor.

It catalyses the reaction (1S,2R)-1-C-(indol-3-yl)glycerol 3-phosphate + L-serine = D-glyceraldehyde 3-phosphate + L-tryptophan + H2O. It participates in amino-acid biosynthesis; L-tryptophan biosynthesis; L-tryptophan from chorismate: step 5/5. In terms of biological role, the beta subunit is responsible for the synthesis of L-tryptophan from indole and L-serine. The protein is Tryptophan synthase beta chain of Klebsiella pneumoniae (strain 342).